The following is a 692-amino-acid chain: uncharacterized protein (692 aa).

2 consecutive Response regulatory domains span residues 9–130 (RVLY…LRMC) and 139–255 (RILI…EYRM). 2 positions are modified to 4-aspartylphosphate: Asp-58 and Asp-188. A GGDEF domain is found at 299–432 (GVHGLVIIDV…GGNQAHVWSA (134 aa)). Residues 443–691 (ESVIKRLVST…SFDFQHMSHD (249 aa)) form the EAL domain.

This is an uncharacterized protein from Thiocystis violacea.